The primary structure comprises 214 residues: Probable nicotinate-nucleotide adenylyltransferase (214 aa).

The protein belongs to the NadD family.

It catalyses the reaction nicotinate beta-D-ribonucleotide + ATP + H(+) = deamido-NAD(+) + diphosphate. The protein operates within cofactor biosynthesis; NAD(+) biosynthesis; deamido-NAD(+) from nicotinate D-ribonucleotide: step 1/1. Functionally, catalyzes the reversible adenylation of nicotinate mononucleotide (NaMN) to nicotinic acid adenine dinucleotide (NaAD). The chain is Probable nicotinate-nucleotide adenylyltransferase from Mycobacterium tuberculosis (strain ATCC 25177 / H37Ra).